The sequence spans 141 residues: MAIERTLSIVKPDAVAKNVIGKIYDRFESAGLKIVAAKMKQLSRAEAEGFYAVHKERPFFKDLVDFMVSGPVMIQALEGENAVLKNRELMGATDPKKAEAGTIRADFAESIDANAVHGSDSVENAAIEVAYFFAASEISSR.

Residues Lys11, Phe59, Arg87, Thr93, Arg104, and Asn114 each contribute to the ATP site. Residue His117 is the Pros-phosphohistidine intermediate of the active site.

This sequence belongs to the NDK family. As to quaternary structure, homotetramer. The cofactor is Mg(2+).

The protein resides in the cytoplasm. It catalyses the reaction a 2'-deoxyribonucleoside 5'-diphosphate + ATP = a 2'-deoxyribonucleoside 5'-triphosphate + ADP. The catalysed reaction is a ribonucleoside 5'-diphosphate + ATP = a ribonucleoside 5'-triphosphate + ADP. Major role in the synthesis of nucleoside triphosphates other than ATP. The ATP gamma phosphate is transferred to the NDP beta phosphate via a ping-pong mechanism, using a phosphorylated active-site intermediate. This Chromobacterium violaceum (strain ATCC 12472 / DSM 30191 / JCM 1249 / CCUG 213 / NBRC 12614 / NCIMB 9131 / NCTC 9757 / MK) protein is Nucleoside diphosphate kinase.